A 190-amino-acid polypeptide reads, in one-letter code: dCTP deaminase, dUMP-forming (190 aa).

Residues lysine 101 to arginine 106, aspartate 119, threonine 127 to glutamate 129, glutamine 148, tyrosine 162, lysine 170, and glutamine 174 each bind dCTP. Residue glutamate 129 is the Proton donor/acceptor of the active site. Residues histidine 160–threonine 190 are disordered. The span at tyrosine 171–threonine 190 shows a compositional bias: polar residues.

The protein belongs to the dCTP deaminase family. In terms of assembly, homotrimer.

It catalyses the reaction dCTP + 2 H2O = dUMP + NH4(+) + diphosphate. The protein operates within pyrimidine metabolism; dUMP biosynthesis; dUMP from dCTP: step 1/1. Bifunctional enzyme that catalyzes both the deamination of dCTP to dUTP and the hydrolysis of dUTP to dUMP without releasing the toxic dUTP intermediate. This chain is dCTP deaminase, dUMP-forming, found in Mycobacterium bovis (strain ATCC BAA-935 / AF2122/97).